Consider the following 413-residue polypeptide: CinA-like protein (413 aa).

It belongs to the CinA family.

This is CinA-like protein from Desulfosudis oleivorans (strain DSM 6200 / JCM 39069 / Hxd3) (Desulfococcus oleovorans).